The sequence spans 378 residues: Putative zinc finger protein 302L (378 aa).

A C2H2-type; degenerate zinc finger spans residues 3–25; it reads IVCEFCDKSFDSKSKVNAHQRTK.

The protein belongs to the IIV-6 302L family.

The chain is Putative zinc finger protein 302L from Invertebrate iridescent virus 6 (IIV-6).